The chain runs to 1165 residues: DNA-directed RNA polymerase subunit beta (1165 aa).

It belongs to the RNA polymerase beta chain family. In terms of assembly, the RNAP catalytic core consists of 2 alpha, 1 beta, 1 beta' and 1 omega subunit. When a sigma factor is associated with the core the holoenzyme is formed, which can initiate transcription.

It catalyses the reaction RNA(n) + a ribonucleoside 5'-triphosphate = RNA(n+1) + diphosphate. DNA-dependent RNA polymerase catalyzes the transcription of DNA into RNA using the four ribonucleoside triphosphates as substrates. In Corynebacterium glutamicum (strain ATCC 13032 / DSM 20300 / JCM 1318 / BCRC 11384 / CCUG 27702 / LMG 3730 / NBRC 12168 / NCIMB 10025 / NRRL B-2784 / 534), this protein is DNA-directed RNA polymerase subunit beta.